The following is a 143-amino-acid chain: Transcription antitermination protein NusB (143 aa).

The protein belongs to the NusB family.

Its function is as follows. Involved in transcription antitermination. Required for transcription of ribosomal RNA (rRNA) genes. Binds specifically to the boxA antiterminator sequence of the ribosomal RNA (rrn) operons. This Desulfatibacillum aliphaticivorans protein is Transcription antitermination protein NusB.